A 671-amino-acid chain; its full sequence is DNA ligase (671 aa).

NAD(+) contacts are provided by residues 32–36 (DAEYD), 81–82 (SL), and Glu-113. Residue Lys-115 is the N6-AMP-lysine intermediate of the active site. Arg-136, Glu-173, Lys-290, and Lys-314 together coordinate NAD(+). The Zn(2+) site is built by Cys-408, Cys-411, Cys-426, and Cys-432. In terms of domain architecture, BRCT spans 593-671 (EIDSPFAGKT…EAEMIRLLGA (79 aa)).

Belongs to the NAD-dependent DNA ligase family. LigA subfamily. The cofactor is Mg(2+). Mn(2+) serves as cofactor.

It catalyses the reaction NAD(+) + (deoxyribonucleotide)n-3'-hydroxyl + 5'-phospho-(deoxyribonucleotide)m = (deoxyribonucleotide)n+m + AMP + beta-nicotinamide D-nucleotide.. Its function is as follows. DNA ligase that catalyzes the formation of phosphodiester linkages between 5'-phosphoryl and 3'-hydroxyl groups in double-stranded DNA using NAD as a coenzyme and as the energy source for the reaction. It is essential for DNA replication and repair of damaged DNA. The polypeptide is DNA ligase (Salmonella newport (strain SL254)).